Reading from the N-terminus, the 496-residue chain is L-arabinose isomerase (496 aa).

Positions 302, 329, 346, and 445 each coordinate Mn(2+).

The protein belongs to the arabinose isomerase family. The cofactor is Mn(2+).

It catalyses the reaction beta-L-arabinopyranose = L-ribulose. The protein operates within carbohydrate degradation; L-arabinose degradation via L-ribulose; D-xylulose 5-phosphate from L-arabinose (bacterial route): step 1/3. Catalyzes the conversion of L-arabinose to L-ribulose. The protein is L-arabinose isomerase of Thermotoga sp. (strain RQ2).